Reading from the N-terminus, the 1895-residue chain is MAHLKLDTLHVQRSPRGSRRSSPSSGRSSACSSGSISPVPIIPIISISHDGDESESESEIETEPARLFQRRMSTKCTNNLAAIIKEGFLLKHTWSFQRWRRRYFRLKRNMLFYAKDEKCDVFDDIDLSDLCYFECGIKNVNHSFQIITPTRSLVLCAESRREMEDWLGSLKTATAPQRPRGDSFLIEQHDILSNHHHWYATSHARPTYCNVCRDALSGVTSHGLSCEVCKCKVHKRCAAKSIANCKWTTLASVGKDIIEQADGIIMPHQWMEGNLPVSSMCAVCKKTCGSVLRLQDWRCLWCRATVHVACRPQMAVACPIGPAKLSVVPPTSVHSISTDDAWDVASPKGNFSPLLVFVNSKSGDNQGVKFLRRFKQLLNPAQVFDLISTGPSLGLRLFRHFEMFRILVCSGDGSVGWVLSEIDRFNMHKQCQVAVMPLGTGNDLARVLGWGSSCDDDTHLPQILERYESASTKMLDRWSIMVFEKAIPVPKTPKMSISTEQEAMLTGMVTSANHHLRFIVETNDTQTLIRSTRNLCDTVDDLVCRISEHHKDDEQLAVKCDILRQKLNMLLDALQEEEIGAHSGDDLIATIRSLIARSIPVTPGSNAYLLNPNISIEKTEKDQINTKERRNSRSLRSSEKEALQCRANSVKRAIYNVVEHSEPGRPKRYQRKLSITPFEALKLPTASGESTPCTSPLPIIPPINIISPTMETSRLTCISPLPDTRRDSVDENFFNSINLPAPRQFADSRRSSGVEVIQEIEEGANGETVYRKSRMSLTGGANIDDAGNRLSPCSDAGENTPTERKVDFLRVPIHTGEPIVDPLCDYRPHEVFERTYYMTREMDKGKEKDKEKDKPVEIDKEKDTCVEKEGSMPAEKLVHTCNLQVPGVVVTPNPQNVYSSASITIIDTDAQTTTEQSSSDDLGGEASDVLSAISNEECSVASEIFDKQDAGQTVGDIIQNMDASNFTHIDSPETSDETEAMPGESIMDDISSVLGHDITYALQDNTLTDDTTTLCSEHAGPPKPPRKKSLSALSRTQAHPRRRNSSPPRMARLARMDSDDNPQQFGFENIVFEIDNRCDDQKMREPPRYCSLAQFVEGNDIARQSFKQLMLEQHRGGDNDSDYPEHEQTPTNKGANLLATTSEDELSTQTAIKIEIQDIDATVRNLNSSMKPNTILTTSTSPTKKSGHGQDVKRITFDESCKKESFDDVNPNYPQISVVVRPPTPLRGDCIKPTVSLLPVSSGGAMTVSMTCSGMLGVRAMNASEIRRHSSHAPGLAVREFDKDKDRRHSGFNPNQLTLDPEHARFLSSSPAASRRISCGSLFKPNEALPNLQTLKGSKSSLFMGSTLFGFDHLASAEKDKEEKSGKDKEKTPTDETNRKLPIINPLVRLPNWPNLANGGGFISKCLLANADTLCAAVSPLMDPDETLLAGYHEKCVMNNYFGIGIDAKISLDFHNKREEHPEKCRSRARNYMWYGVLGSKQLLQKTCKNLEQRVQLECDGQRIPLPELQGIVILNIPSFMGGTNFWGSSKKDDIFLPPSFDDRVLEVVAVFGSVQMAASRLINLQHHRIAQCQSVQINILGDEEIPIQVDGEAWLQPPGMIRILHKNRVQMLCRNRSLELSLKSWQEKQRQHSISIQRDASSTASEHANSTDEVISERECYVLLNFIEAVSSLVKWVKFLIISHPALQHDLYEVACRASEALESIHPQGKLLEGPSLRTKLVEVIDSSRQLYDDACTLLRDRGHSLILREDLETKLSAALANMEMELKKCSVQKCIDGKLRAYFNVLAPNEESDGRRKSRPFWVRLRSGSTAGQQAFKPPLTNTREAANNWSVNEVVTWLETMQLSEYVDSFLKNDIRGKELLTLGRRDLKDLGVVKVGHVKRILQAIKDLSEN.

Over residues 1–10 (MAHLKLDTLH) the composition is skewed to basic and acidic residues. The segment at 1–37 (MAHLKLDTLHVQRSPRGSRRSSPSSGRSSACSSGSIS) is disordered. Residues 20–37 (RSSPSSGRSSACSSGSIS) are compositionally biased toward low complexity. In terms of domain architecture, PH spans 82–175 (AIIKEGFLLK…WLGSLKTATA (94 aa)). Phorbol-ester/DAG-type zinc fingers lie at residues 195–245 (HHHW…IANC) and 267–318 (PHQW…AVAC). The 137-residue stretch at 349 to 485 (GNFSPLLVFV…DRWSIMVFEK (137 aa)) folds into the DAGKc domain. 4 disordered regions span residues 781–801 (ANID…ENTP), 1012–1053 (TTLC…MARL), 1113–1137 (QHRG…GANL), and 1172–1191 (PNTI…HGQD). Basic and acidic residues predominate over residues 1113-1128 (QHRGGDNDSDYPEHEQ). Polar residues predominate over residues 1172 to 1184 (PNTILTTSTSPTK). An SAM domain is found at 1832–1895 (WSVNEVVTWL…LQAIKDLSEN (64 aa)).

Belongs to the eukaryotic diacylglycerol kinase family.

The protein resides in the cytoplasm. It catalyses the reaction a 1,2-diacyl-sn-glycerol + ATP = a 1,2-diacyl-sn-glycero-3-phosphate + ADP + H(+). Functionally, phosphorylates diacylglycerol (DAG) to generate phosphatidic acid (PA). The polypeptide is Diacylglycerol kinase eta (Drosophila melanogaster (Fruit fly)).